Reading from the N-terminus, the 536-residue chain is C-22 sterol desaturase ERG5A (536 aa).

The helical transmembrane segment at 41–61 (VWTWVFTLVALCIAYDQIAYI) threads the bilayer. Heme is bound at residue C481.

Belongs to the cytochrome P450 family. Requires heme as cofactor.

The protein resides in the endoplasmic reticulum membrane. The enzyme catalyses 5-dehydroepisterol + NADPH + O2 + H(+) = ergosta-5,7,22,24(28)-tetraen-3beta-ol + NADP(+) + 2 H2O. Its pathway is steroid metabolism; ergosterol biosynthesis. Functionally, C-22 sterol desaturase; part of the third module of ergosterol biosynthesis pathway that includes the late steps of the pathway. ERG5A and ERG5B convert 5-dehydroepisterol into ergosta-5,7,22,24(28)-tetraen-3beta-ol by forming the C-22(23) double bond in the sterol side chain. The third module or late pathway involves the ergosterol synthesis itself through consecutive reactions that mainly occur in the endoplasmic reticulum (ER) membrane. Firstly, the squalene synthase ERG9 catalyzes the condensation of 2 farnesyl pyrophosphate moieties to form squalene, which is the precursor of all steroids. Squalene synthase is crucial for balancing the incorporation of farnesyl diphosphate (FPP) into sterol and nonsterol isoprene synthesis. Secondly, squalene is converted into lanosterol by the consecutive action of the squalene epoxidase ERG1 and the lanosterol synthase ERG7. Then, the delta(24)-sterol C-methyltransferase ERG6 methylates lanosterol at C-24 to produce eburicol. Eburicol is the substrate of the sterol 14-alpha demethylase encoded by CYP51A, CYP51B and CYP51C, to yield 4,4,24-trimethyl ergosta-8,14,24(28)-trienol. CYP51B encodes the enzyme primarily responsible for sterol 14-alpha-demethylation, and plays an essential role in ascospore formation. CYP51A encodes an additional sterol 14-alpha-demethylase, induced on ergosterol depletion and responsible for the intrinsic variation in azole sensitivity. The third CYP51 isoform, CYP51C, does not encode a sterol 14-alpha-demethylase, but is required for full virulence on host wheat ears. The C-14 reductase ERG24 then reduces the C14=C15 double bond which leads to 4,4-dimethylfecosterol. A sequence of further demethylations at C-4, involving the C-4 demethylation complex containing the C-4 methylsterol oxidases ERG25, the sterol-4-alpha-carboxylate 3-dehydrogenase ERG26 and the 3-keto-steroid reductase ERG27, leads to the production of fecosterol via 4-methylfecosterol. ERG28 has a role as a scaffold to help anchor ERG25, ERG26 and ERG27 to the endoplasmic reticulum. The C-8 sterol isomerase ERG2 then catalyzes the reaction which results in unsaturation at C-7 in the B ring of sterols and thus converts fecosterol to episterol. The sterol-C5-desaturases ERG3A and ERG3BB then catalyze the introduction of a C-5 double bond in the B ring to produce 5-dehydroepisterol. The C-22 sterol desaturases ERG5A and ERG5B further convert 5-dehydroepisterol into ergosta-5,7,22,24(28)-tetraen-3beta-ol by forming the C-22(23) double bond in the sterol side chain. Finally, ergosta-5,7,22,24(28)-tetraen-3beta-ol is substrate of the C-24(28) sterol reductase ERG4 to produce ergosterol. The sequence is that of C-22 sterol desaturase ERG5A from Gibberella zeae (strain ATCC MYA-4620 / CBS 123657 / FGSC 9075 / NRRL 31084 / PH-1) (Wheat head blight fungus).